A 371-amino-acid chain; its full sequence is Poly(rC)-binding protein 3 (371 aa).

KH domains follow at residues 45–95 (TLTI…TITG), 129–182 (PVTL…TISG), and 293–357 (ASTH…QYLI).

Widely expressed, with highest levels in testis and fat tissues and lowest in heart.

It is found in the cytoplasm. Functionally, single-stranded nucleic acid binding protein that binds preferentially to oligo dC. This is Poly(rC)-binding protein 3 (Pcbp3) from Mus musculus (Mouse).